We begin with the raw amino-acid sequence, 492 residues long: Mitochondrial distribution and morphology protein 12 (492 aa).

Residues 1–492 (MSIDLNWETV…VYPSFWTFLV (492 aa)) enclose the SMP-LTD domain. Disordered stretches follow at residues 68-158 (DFYE…STPG), 199-301 (LEGH…GHPR), and 379-434 (AVGG…GSGN). The segment covering 78 to 90 (VASDDSEGEEDAV) has biased composition (acidic residues). The span at 130–139 (SPGGPGGPGM) shows a compositional bias: gly residues. A compositionally biased stretch (low complexity) spans 246–257 (LNPNSLAPPSSS). Residues 270–285 (TTPAPGSATALSGSNE) are compositionally biased toward polar residues. Low complexity predominate over residues 387 to 400 (GLSSPGEGPSQAQG). Residues 401–415 (QGQGQGQGQGQGQTP) are compositionally biased toward gly residues. The span at 416–428 (GAGQQKQQKKQAG) shows a compositional bias: low complexity.

This sequence belongs to the MDM12 family. As to quaternary structure, component of the ER-mitochondria encounter structure (ERMES) or MDM complex, composed of MMM1, MDM10, MDM12 and MDM34. An MMM1 homodimer associates with one molecule of MDM12 on each side in a pairwise head-to-tail manner, and the SMP-LTD domains of MMM1 and MDM12 generate a continuous hydrophobic tunnel for phospholipid trafficking.

The protein localises to the mitochondrion outer membrane. It is found in the endoplasmic reticulum membrane. Component of the ERMES/MDM complex, which serves as a molecular tether to connect the endoplasmic reticulum (ER) and mitochondria. Components of this complex are involved in the control of mitochondrial shape and protein biogenesis, and function in nonvesicular lipid trafficking between the ER and mitochondria. MDM12 is required for the interaction of the ER-resident membrane protein MMM1 and the outer mitochondrial membrane-resident beta-barrel protein MDM10. The MDM12-MMM1 subcomplex functions in the major beta-barrel assembly pathway that is responsible for biogenesis of all mitochondrial outer membrane beta-barrel proteins, and acts in a late step after the SAM complex. The MDM10-MDM12-MMM1 subcomplex further acts in the TOM40-specific pathway after the action of the MDM12-MMM1 complex. Essential for establishing and maintaining the structure of mitochondria and maintenance of mtDNA nucleoids. In Chaetomium globosum (strain ATCC 6205 / CBS 148.51 / DSM 1962 / NBRC 6347 / NRRL 1970) (Soil fungus), this protein is Mitochondrial distribution and morphology protein 12.